The following is a 160-amino-acid chain: Endoribonuclease YbeY (160 aa).

Histidine 125, histidine 129, and histidine 135 together coordinate Zn(2+).

This sequence belongs to the endoribonuclease YbeY family. It depends on Zn(2+) as a cofactor.

It is found in the cytoplasm. Its function is as follows. Single strand-specific metallo-endoribonuclease involved in late-stage 70S ribosome quality control and in maturation of the 3' terminus of the 16S rRNA. The protein is Endoribonuclease YbeY of Dehalococcoides mccartyi (strain ATCC BAA-2100 / JCM 16839 / KCTC 5957 / BAV1).